Consider the following 104-residue polypeptide: MSYAVIVTGGKQYKVAEGEFLKIEKLEVATGESVTFDRVLLVANGEEVTIGAPVVAGAKVVAEVVSQGRHDKVRIIKFRRRKHHMKRMGHRQWFTEIKITGIQA.

It belongs to the bacterial ribosomal protein bL21 family. As to quaternary structure, part of the 50S ribosomal subunit. Contacts protein L20.

In terms of biological role, this protein binds to 23S rRNA in the presence of protein L20. The sequence is that of Large ribosomal subunit protein bL21 from Pseudomonas putida (strain GB-1).